We begin with the raw amino-acid sequence, 223 residues long: Serum amyloid P-component (223 aa).

An N-terminal signal peptide occupies residues 1 to 19; it reads MNKPLLWISVLTSLLEAFA. The region spanning 24-223 is the Pentraxin (PTX) domain; the sequence is SGKVFVFPRE…YVIIKPLVWV (200 aa). A glycan (N-linked (GlcNAc...) asparagine) is linked at Asn-51. Cys-55 and Cys-114 are disulfide-bonded. The Ca(2+) site is built by Asp-77, Asn-78, Glu-155, Gln-156, Asp-157, and Gln-167.

It belongs to the pentraxin family. As to quaternary structure, homopentamer. Pentraxin (or pentaxin) have a discoid arrangement of 5 non-covalently bound subunits. Ca(2+) is required as a cofactor. Post-translationally, N-glycosylated with a complex biantennary oligosaccharide chain with a sialic acid at the end (disialo-SAP). Monosialo-SAP as well as asioalo-SAP are also detected. In terms of tissue distribution, found in serum and urine.

Its subcellular location is the secreted. Its function is as follows. Can interact with DNA and histones and may scavenge nuclear material released from damaged circulating cells. May also function as a calcium-dependent lectin. The polypeptide is Serum amyloid P-component (APCS) (Homo sapiens (Human)).